The following is a 481-amino-acid chain: Beta-1,3-glucan-binding protein (481 aa).

Positions 1 to 18 (RCARVCAVLFLFIQISYG) are cleaved as a signal peptide. Residues 20–120 (YQVPQVTVQA…LSFTVSALED (101 aa)) enclose the CBM39 domain. N-linked (GlcNAc...) asparagine glycosylation occurs at asparagine 110. The region spanning 124-481 (TGTGTDPVPT…LVDYVKVVAL (358 aa)) is the GH16 domain.

The protein belongs to the insect beta-1,3-glucan binding protein family.

The protein resides in the secreted. Involved in the recognition of invading microorganisms. Binds specifically to beta-1,3-glucan and activates the phenoloxidase cascade. This is Beta-1,3-glucan-binding protein from Hyphantria cunea (Fall webworm moth).